A 633-amino-acid chain; its full sequence is Pesticidal crystal protein Cry2Ab (633 aa).

Belongs to the delta endotoxin family.

Promotes colloidosmotic lysis by binding to the midgut epithelial cells of lepidopteran (Manduca sexta) larvae. The protein is Pesticidal crystal protein Cry2Ab (cry2Ab) of Bacillus thuringiensis subsp. kurstaki.